Consider the following 154-residue polypeptide: MATSVELSSYRDQHFKGSRSEQERSLKDSCTLYVGNLSFYTTEEQIHELFSRCGDVRLIVMGLDKYKKTPCGFCFVEYYIRSEAESAMRFVNGTRLDDRLIRVDWDAGFIEGRQYGRGKTGGQVRDEYRTDYDAGRGGYGKLLSLKIAPNTDNR.

MRNA-binding positions include Tyr10, Tyr33, 102 to 106, 113 to 117, and 123 to 124; these read RVDWD, RQYGR, and QV. Residues 30–108 form the RRM domain; sequence CTLYVGNLSF…RLIRVDWDAG (79 aa).

This sequence belongs to the RRM NCBP2 family. Component of the nuclear cap-binding complex (CBC), a heterodimer composed of Cbp80 and Cbp20 that interacts with m7GpppG-capped RNA. Interacts with Ars2.

Its subcellular location is the nucleus. Functionally, component of the cap-binding complex (CBC), which binds co-transcriptionally to the 5' cap of pre-mRNAs and is involved in various processes such as pre-mRNA splicing and RNA-mediated gene silencing (RNAi). The CBC complex is involved in miRNA-mediated RNA interference via its interaction with Ars2 and is required for primary microRNAs (miRNAs) processing. Also involved in innate immunity via the short interfering RNAs (siRNAs) processing machinery by restricting the viral RNA production. In the CBC complex, Cbp20 recognizes and binds capped RNAs (m7GpppG-capped RNA) but requires Cbp80 to stabilize the movement of its N-terminal loop and lock the CBC into a high affinity cap-binding state with the cap structure. This is Nuclear cap-binding protein subunit 2 (Cbp20) from Drosophila persimilis (Fruit fly).